The chain runs to 117 residues: Small ribosomal subunit protein bS6 (117 aa).

This sequence belongs to the bacterial ribosomal protein bS6 family.

In terms of biological role, binds together with bS18 to 16S ribosomal RNA. This chain is Small ribosomal subunit protein bS6, found in Roseobacter denitrificans (strain ATCC 33942 / OCh 114) (Erythrobacter sp. (strain OCh 114)).